The sequence spans 492 residues: Protein nucleotidyltransferase YdiU (492 aa).

Residues Gly-88, Gly-90, Arg-91, Lys-111, Asp-123, Gly-124, Arg-174, and Arg-181 each contribute to the ATP site. Catalysis depends on Asp-250, which acts as the Proton acceptor. Mg(2+)-binding residues include Asn-251 and Asp-260. Asp-260 lines the ATP pocket.

The protein belongs to the SELO family. Mg(2+) serves as cofactor. Requires Mn(2+) as cofactor.

The catalysed reaction is L-seryl-[protein] + ATP = 3-O-(5'-adenylyl)-L-seryl-[protein] + diphosphate. The enzyme catalyses L-threonyl-[protein] + ATP = 3-O-(5'-adenylyl)-L-threonyl-[protein] + diphosphate. It carries out the reaction L-tyrosyl-[protein] + ATP = O-(5'-adenylyl)-L-tyrosyl-[protein] + diphosphate. It catalyses the reaction L-histidyl-[protein] + UTP = N(tele)-(5'-uridylyl)-L-histidyl-[protein] + diphosphate. The catalysed reaction is L-seryl-[protein] + UTP = O-(5'-uridylyl)-L-seryl-[protein] + diphosphate. The enzyme catalyses L-tyrosyl-[protein] + UTP = O-(5'-uridylyl)-L-tyrosyl-[protein] + diphosphate. Nucleotidyltransferase involved in the post-translational modification of proteins. It can catalyze the addition of adenosine monophosphate (AMP) or uridine monophosphate (UMP) to a protein, resulting in modifications known as AMPylation and UMPylation. In Rhodopseudomonas palustris (strain HaA2), this protein is Protein nucleotidyltransferase YdiU.